Consider the following 251-residue polypeptide: Aliphatic sulfonates import ATP-binding protein SsuB (251 aa).

An ABC transporter domain is found at 3-231; the sequence is VSINEVSKYF…PRNKTSQSFQ (229 aa). 39–46 is an ATP binding site; it reads GPSGCGKS.

Belongs to the ABC transporter superfamily. Aliphatic sulfonates importer (TC 3.A.1.17.2) family. The complex is composed of two ATP-binding proteins (SsuB), two transmembrane proteins (SsuC) and a solute-binding protein (SsuA).

Its subcellular location is the cell membrane. It catalyses the reaction ATP + H2O + aliphatic sulfonate-[sulfonate-binding protein]Side 1 = ADP + phosphate + aliphatic sulfonateSide 2 + [sulfonate-binding protein]Side 1.. Part of the ABC transporter complex SsuABC involved in aliphatic sulfonates import. Responsible for energy coupling to the transport system. The sequence is that of Aliphatic sulfonates import ATP-binding protein SsuB from Bacillus thuringiensis subsp. konkukian (strain 97-27).